The primary structure comprises 88 residues: Small ribosomal subunit protein uS15 (88 aa).

It belongs to the universal ribosomal protein uS15 family. In terms of assembly, part of the 30S ribosomal subunit. Forms a bridge to the 50S subunit in the 70S ribosome, contacting the 23S rRNA.

One of the primary rRNA binding proteins, it binds directly to 16S rRNA where it helps nucleate assembly of the platform of the 30S subunit by binding and bridging several RNA helices of the 16S rRNA. In terms of biological role, forms an intersubunit bridge (bridge B4) with the 23S rRNA of the 50S subunit in the ribosome. This Francisella tularensis subsp. novicida (strain U112) protein is Small ribosomal subunit protein uS15.